The primary structure comprises 528 residues: (R)-citramalate synthase (528 aa).

Positions 4–266 (VKLYDTTLRD…RECIGDDQLR (263 aa)) constitute a Pyruvate carboxyltransferase domain.

It belongs to the alpha-IPM synthase/homocitrate synthase family.

The catalysed reaction is pyruvate + acetyl-CoA + H2O = (3R)-citramalate + CoA + H(+). It participates in amino-acid biosynthesis; L-isoleucine biosynthesis; 2-oxobutanoate from pyruvate: step 1/3. Functionally, catalyzes the condensation of pyruvate and acetyl-coenzyme A to form (R)-citramalate. Makes part of the main pathway for isoleucine biosynthesis in G.sulfurreducens, i.e. the citramalate-dependent pathway. The protein is (R)-citramalate synthase of Geobacter sulfurreducens (strain ATCC 51573 / DSM 12127 / PCA).